The chain runs to 95 residues: 1,2-phenylacetyl-CoA epoxidase, subunit B (95 aa).

As to quaternary structure, homotrimer. Forms a stable heterodimer with PaaC. Probably forms an oligomer with PaaAC.

It functions in the pathway aromatic compound metabolism; phenylacetate degradation. Functionally, component of 1,2-phenylacetyl-CoA epoxidase multicomponent enzyme system which catalyzes the reduction of phenylacetyl-CoA (PA-CoA) to form 1,2-epoxyphenylacetyl-CoA. The subunit B may play a regulatory role or be directly involved in electron transport. The polypeptide is 1,2-phenylacetyl-CoA epoxidase, subunit B (paaB) (Escherichia coli (strain K12)).